The primary structure comprises 204 residues: ATP phosphoribosyltransferase (204 aa).

This sequence belongs to the ATP phosphoribosyltransferase family. Short subfamily. As to quaternary structure, heteromultimer composed of HisG and HisZ subunits.

The protein localises to the cytoplasm. The catalysed reaction is 1-(5-phospho-beta-D-ribosyl)-ATP + diphosphate = 5-phospho-alpha-D-ribose 1-diphosphate + ATP. Its pathway is amino-acid biosynthesis; L-histidine biosynthesis; L-histidine from 5-phospho-alpha-D-ribose 1-diphosphate: step 1/9. Its function is as follows. Catalyzes the condensation of ATP and 5-phosphoribose 1-diphosphate to form N'-(5'-phosphoribosyl)-ATP (PR-ATP). Has a crucial role in the pathway because the rate of histidine biosynthesis seems to be controlled primarily by regulation of HisG enzymatic activity. This is ATP phosphoribosyltransferase from Staphylococcus aureus (strain USA300).